Consider the following 129-residue polypeptide: Phosphoribosyl-AMP cyclohydrolase (129 aa).

A Mg(2+)-binding site is contributed by aspartate 82. Cysteine 83 lines the Zn(2+) pocket. Positions 84 and 86 each coordinate Mg(2+). Zn(2+) is bound by residues cysteine 99 and cysteine 106.

It belongs to the PRA-CH family. As to quaternary structure, homodimer. Mg(2+) serves as cofactor. It depends on Zn(2+) as a cofactor.

Its subcellular location is the cytoplasm. It catalyses the reaction 1-(5-phospho-beta-D-ribosyl)-5'-AMP + H2O = 1-(5-phospho-beta-D-ribosyl)-5-[(5-phospho-beta-D-ribosylamino)methylideneamino]imidazole-4-carboxamide. The protein operates within amino-acid biosynthesis; L-histidine biosynthesis; L-histidine from 5-phospho-alpha-D-ribose 1-diphosphate: step 3/9. Functionally, catalyzes the hydrolysis of the adenine ring of phosphoribosyl-AMP. In Methanosarcina barkeri (strain Fusaro / DSM 804), this protein is Phosphoribosyl-AMP cyclohydrolase.